Reading from the N-terminus, the 141-residue chain is MIVSNKHARRNYELLDFFECGIVLKGTEVKSISRANCSINEAYVQIIKNQALILNMHVANFFEGNNFNQDPYRNRKLLLHKKEIIRLQHLVKTQHMTIVPTKIYWKNNKLKIEIALGKGKQLHDKREDIKKRDLARETRLF.

It belongs to the SmpB family.

The protein resides in the cytoplasm. Its function is as follows. Required for rescue of stalled ribosomes mediated by trans-translation. Binds to transfer-messenger RNA (tmRNA), required for stable association of tmRNA with ribosomes. tmRNA and SmpB together mimic tRNA shape, replacing the anticodon stem-loop with SmpB. tmRNA is encoded by the ssrA gene; the 2 termini fold to resemble tRNA(Ala) and it encodes a 'tag peptide', a short internal open reading frame. During trans-translation Ala-aminoacylated tmRNA acts like a tRNA, entering the A-site of stalled ribosomes, displacing the stalled mRNA. The ribosome then switches to translate the ORF on the tmRNA; the nascent peptide is terminated with the 'tag peptide' encoded by the tmRNA and targeted for degradation. The ribosome is freed to recommence translation, which seems to be the essential function of trans-translation. This chain is SsrA-binding protein, found in Ureaplasma parvum serovar 3 (strain ATCC 27815 / 27 / NCTC 11736).